A 398-amino-acid chain; its full sequence is MEMNKVLHQDLVQATRRILKLGPSELRVTDAGLICKNPNYSVCDAMLKTDTVYCVEYLLSYWESRTDHVPCFIFKNTGCAVSLCCFVRAPVKLVSPARHVGEFNVLKVNESLIVTLKDIEEIKPSAYGVLTKCVVRKSNSASVFNIELIAFGPENEGEYENLLRELYAKKAASTSLAVRNHVTVSSHSGSGPSLWRARMSAALTRTAGKRSPRTASPPPPPPRHPSCSPTMVAAGGAAAGPRPPPPPMAAGSWRLCRCEACMGRCGCASEGDADEEEEELLALAGEGKAAAAAAGQDIGGSARRPLEEHVSRRRGVSTHHRHPPSPPCTPSLERTGYRWAPSSWWRARSGPSRPQSGPWLPARFATLGPLVLALLLVLALLWRGHGQSSSPTRSAHRD.

At 1–359 (MEMNKVLHQD…GPSRPQSGPW (359 aa)) the chain is on the perinuclear space side. Disordered stretches follow at residues 202-246 (ALTR…PPPP) and 306-334 (LEEHVSRRRGVSTHHRHPPSPPCTPSLER). Positions 215-224 (ASPPPPPPRH) are enriched in pro residues. Ser-216 carries the post-translational modification Phosphoserine. The span at 225–240 (PSCSPTMVAAGGAAAG) shows a compositional bias: low complexity. Residues 311–323 (SRRRGVSTHHRHP) show a composition bias toward basic residues. Residues 360–382 (LPARFATLGPLVLALLLVLALLW) form a helical membrane-spanning segment. Residues 383–398 (RGHGQSSSPTRSAHRD) are Nuclear-facing.

This sequence belongs to the herpesviridae NEC2 protein family. In terms of assembly, forms a heterohexameric complex with NEC1. Interacts with host UBA7 and RNF170; this interaction promotes UBA7 proteasomal degradation. Phosphorylated. Phosphorylation by viral kinase UL97 at Ser-216 plays an important role for correct viral nuclear egress complex (NEC) localization.

It localises to the host nucleus inner membrane. Plays an essential role in virion nuclear egress, the first step of virion release from infected cell. Within the host nucleus, NEC1 interacts with the newly formed capsid through the vertexes and directs it to the inner nuclear membrane by associating with NEC2. Induces the budding of the capsid at the inner nuclear membrane as well as its envelopment into the perinuclear space. There, the NEC1/NEC2 complex promotes the fusion of the enveloped capsid with the outer nuclear membrane and the subsequent release of the viral capsid into the cytoplasm where it will reach the secondary budding sites in the host Golgi or trans-Golgi network. Inhibits host ISGylation and subsequent innate antiviral response by targeting host UBA7 for proteasomal degradation. The polypeptide is Nuclear egress protein 2 (Homo sapiens (Human)).